A 158-amino-acid chain; its full sequence is Transcriptional repressor NrdR (158 aa).

The segment at 3-34 (CPFCGSLDTQVIDSRANEAGDAIRRRRRCAAC) is a zinc-finger region. The 91-residue stretch at 49 to 139 (PQIVKTNGTR…VYKSFKDPDD (91 aa)) folds into the ATP-cone domain.

The protein belongs to the NrdR family. It depends on Zn(2+) as a cofactor.

In terms of biological role, negatively regulates transcription of bacterial ribonucleotide reductase nrd genes and operons by binding to NrdR-boxes. This chain is Transcriptional repressor NrdR, found in Thiobacillus denitrificans (strain ATCC 25259 / T1).